The following is a 255-amino-acid chain: Ribonuclease HII (255 aa).

Residues 73–255 (LYIGGIDEAG…HRKSFLKNIL (183 aa)) form the RNase H type-2 domain. 3 residues coordinate a divalent metal cation: Asp79, Glu80, and Asp171.

The protein belongs to the RNase HII family. It depends on Mn(2+) as a cofactor. Mg(2+) serves as cofactor.

Its subcellular location is the cytoplasm. The enzyme catalyses Endonucleolytic cleavage to 5'-phosphomonoester.. Its function is as follows. Endonuclease that specifically degrades the RNA of RNA-DNA hybrids. This chain is Ribonuclease HII, found in Clostridioides difficile (strain 630) (Peptoclostridium difficile).